Reading from the N-terminus, the 197-residue chain is Phosphoheptose isomerase (197 aa).

Residues 34-196 (MVHCLLSGNK…DHTLFPQDEQ (163 aa)) form the SIS domain. Residue 49 to 51 (NGG) participates in substrate binding. Zn(2+)-binding residues include His58 and Glu62. Substrate contacts are provided by residues Glu62, 91–92 (ND), 117–119 (STS), Ser122, and Gln172. Residues Gln172 and His180 each contribute to the Zn(2+) site.

It belongs to the SIS family. GmhA subfamily. In terms of assembly, homotetramer. Requires Zn(2+) as cofactor.

Its subcellular location is the cytoplasm. The enzyme catalyses 2 D-sedoheptulose 7-phosphate = D-glycero-alpha-D-manno-heptose 7-phosphate + D-glycero-beta-D-manno-heptose 7-phosphate. It participates in carbohydrate biosynthesis; D-glycero-D-manno-heptose 7-phosphate biosynthesis; D-glycero-alpha-D-manno-heptose 7-phosphate and D-glycero-beta-D-manno-heptose 7-phosphate from sedoheptulose 7-phosphate: step 1/1. Functionally, catalyzes the isomerization of sedoheptulose 7-phosphate in D-glycero-D-manno-heptose 7-phosphate. The sequence is that of Phosphoheptose isomerase from Shewanella halifaxensis (strain HAW-EB4).